Here is a 599-residue protein sequence, read N- to C-terminus: ATP-dependent zinc metalloprotease FtsH 3 (599 aa).

The Cytoplasmic portion of the chain corresponds to 1 to 7 (MKYKKKN). The helical transmembrane segment at 8–28 (ILFITTIIVIYLAFLFNWLEI) threads the bilayer. The Extracellular portion of the chain corresponds to 29–128 (GIFKPKGESI…PFSWLLSIFS (100 aa)). The chain crosses the membrane as a helical span at residues 129 to 149 (ILLNFINVLSSLVFTIYIFLA). Residues 150-599 (IHRESGKLNS…IEQLVVNTKK (450 aa)) lie on the Cytoplasmic side of the membrane. 214-221 (GPPGTGKT) contacts ATP. H436 is a Zn(2+) binding site. Residue E437 is part of the active site. Zn(2+) is bound by residues H440 and D512.

This sequence in the central section; belongs to the AAA ATPase family. The protein in the C-terminal section; belongs to the peptidase M41 family. As to quaternary structure, homohexamer. Requires Zn(2+) as cofactor.

It localises to the cell membrane. Its function is as follows. Acts as a processive, ATP-dependent zinc metallopeptidase for both cytoplasmic and membrane proteins. Plays a role in the quality control of integral membrane proteins. In Phytoplasma mali (strain AT), this protein is ATP-dependent zinc metalloprotease FtsH 3.